We begin with the raw amino-acid sequence, 443 residues long: KH domain-containing, RNA-binding, signal transduction-associated protein 1 (443 aa).

Residues 1–96 (MQRRDDPAAR…LPPSATASVK (96 aa)) form a disordered region. A compositionally biased stretch (low complexity) spans 10–21 (RMSRSSGRSGSM). Ser18, Ser20, and Ser29 each carry phosphoserine. Thr33 is subject to Phosphothreonine. Residue Arg45 is modified to Asymmetric dimethylarginine; by PRMT1. Arg52 is modified (asymmetric dimethylarginine; partial; by PRMT1). Position 58 is a phosphoserine (Ser58). Thr84 is modified (phosphothreonine; by MAPK1). Residues Lys96 and Lys102 each participate in a glycyl lysine isopeptide (Lys-Gly) (interchain with G-Cter in SUMO2) cross-link. Residues 100–260 (ENKYLPELMA…VKKFLVPDMM (161 aa)) are involved in homodimerization. Residue Ser113 is modified to Phosphoserine. Lys139 is covalently cross-linked (Glycyl lysine isopeptide (Lys-Gly) (interchain with G-Cter in SUMO2)). At Ser150 the chain carries Phosphoserine. A KH domain is found at 171–197 (NFVGKILGPQGNTIKRLQEETGAKISV). Position 175 is an N6-acetyllysine; alternate (Lys175). Residue Lys175 forms a Glycyl lysine isopeptide (Lys-Gly) (interchain with G-Cter in SUMO2); alternate linkage. Thr183 carries the phosphothreonine modification. The segment covering 280–293 (PSRGRGVPVRGRGA) has biased composition (low complexity). The segment at 280–316 (PSRGRGVPVRGRGAAPPPPPVPRGRGVGPPRGALVRG) is disordered. 3 positions are modified to omega-N-methylarginine: Arg282, Arg284, and Arg291. Arg304 carries the post-translational modification Asymmetric dimethylarginine; by PRMT1. The span at 307-316 (GPPRGALVRG) shows a compositional bias: low complexity. An omega-N-methylarginine; by PRMT1 mark is found at Arg310, Arg315, Arg320, and Arg325. A Dimethylated arginine; in A2780 ovarian carcinoma cell line modification is found at Arg320. Positions 327–346 (ATVTRGVPPPPTVRGAPAPR) are disordered. Arg331 and Arg340 each carry dimethylated arginine; in A2780 ovarian carcinoma cell line. The residue at position 331 (Arg331) is an Asymmetric dimethylarginine; alternate. Omega-N-methylarginine; by PRMT1; alternate is present on Arg331. Arg340 carries the omega-N-methylarginine; by PRMT1 modification. The tract at residues 351–443 (GIQRIPLPPP…AYREHPYGRY (93 aa)) is interaction with HNRNPA1. The residue at position 387 (Tyr387) is a Phosphotyrosine. A Phosphoserine modification is found at Ser390. The interaction with ZBTB7A stretch occupies residues 400–420 (GHGEVQDSYEAYGQDDWNGTR). The disordered stretch occupies residues 411-443 (YGQDDWNGTRPSLKAPPARPVKGAYREHPYGRY). A Glycyl lysine isopeptide (Lys-Gly) (interchain with G-Cter in SUMO2) cross-link involves residue Lys432. A compositionally biased stretch (basic and acidic residues) spans 434–443 (AYREHPYGRY). Residues Tyr435, Tyr440, and Tyr443 each carry the phosphotyrosine; by PTK6 modification.

Belongs to the KHDRBS family. Self-associates to form homooligomers when bound to RNA, oligomerization appears to be limited when binding to proteins; dimerization increases RNA affinity. Forms a trimeric complex in the nucleus consisting of BANP, HDAC6 and KHDRBS1/SAM68; HDAC6 keeps KHDRBS1 in a deacetylated state which inhibits the inclusion of CD44 alternate exons. The complex is disrupted by MAPK1/MAPK3-mediated phosphorylation of BANP which results in BANP export to the cytoplasm. This facilitates acetylation of KHDRBS1 and CD44 variant exon inclusion. Interacts with KHDRBS3/SLIM-2. Interacts with KHDRBS2/SLIM-1; heterooligomer formation of KHDRBS family proteins may modulate RNA substrate specificity. Interacts with RASA1, LCK, FYN, PTPN6, PLCG1, GRB2, CBL, JAK3, PIK3R, STAT3, APC, HNRNPA1. Interacts with PTK6 (via SH3 and SH2 domains). Forms a complex with ILF2, ILF3, YLPM1, RBMX, NCOA5 and PPP1CA. Does not interact with TPR. Interacts with PRMT1. Binds WBP4/FBP21 (via WW domains), FNBP4/FBP30 (via WW domains). Interacts (via Arg/Gly-rich-flanked Pro-rich regions) with FYN (via the SH3 domain). Interacts with the non-receptor tyrosine kinase SRMS; the interaction leads to phosphorylation of KHDRBS1. Interacts with ZBTB7A; negatively regulates KHDRBS1 splicing activity toward BCL2L1. Post-translationally, tyrosine phosphorylated by several non-receptor tyrosine kinases including LCK, FYN and JAK3. Also tyrosine phosphorylated by the non-receptor tyrosine kinase SRMS in an EGF-dependent manner. Negatively correlates with ability to bind RNA but required for many interactions with proteins. Phosphorylation by PTK6 negatively regulates its RNA binding ability. Phosphorylation by PTK6 at Tyr-440 dictates the nuclear localization of KHDRBS1. Phosphorylation at Tyr-387 disrupts interaction with APC. Phosphorylation at tyrosine residues by FYN inverts activity on modulation of BCL2L1 alternative splicing. In terms of processing, acetylated. Positively correlates with ability to bind RNA. Deacetylated by HDAC6; this regulates alternative splicing by inhibiting the inclusion of CD44 alternate exons. Arginine methylation is required for nuclear localization. Also can affect interaction with other proteins. Inhibits interaction with Src-like SH3 domains, but not interaction with WW domains of WBP4/FBP21 and FNBP4/FBP30. Ubiquitously expressed in all tissue examined. Isoform 1 is expressed at lower levels in brain, skeletal muscle, and liver whereas isoform 3 is intensified in skeletal muscle and in liver.

It is found in the nucleus. Its subcellular location is the cytoplasm. The protein resides in the membrane. Functionally, recruited and tyrosine phosphorylated by several receptor systems, for example the T-cell, leptin and insulin receptors. Once phosphorylated, functions as an adapter protein in signal transduction cascades by binding to SH2 and SH3 domain-containing proteins. Role in G2-M progression in the cell cycle. Represses CBP-dependent transcriptional activation apparently by competing with other nuclear factors for binding to CBP. Also acts as a putative regulator of mRNA stability and/or translation rates and mediates mRNA nuclear export. Positively regulates the association of constitutive transport element (CTE)-containing mRNA with large polyribosomes and translation initiation. According to some authors, is not involved in the nucleocytoplasmic export of unspliced (CTE)-containing RNA species according to. RNA-binding protein that plays a role in the regulation of alternative splicing and influences mRNA splice site selection and exon inclusion. Binds to RNA containing 5'-[AU]UAA-3' as a bipartite motif spaced by more than 15 nucleotides. Binds poly(A). Can regulate CD44 alternative splicing in a Ras pathway-dependent manner. In cooperation with HNRNPA1 modulates alternative splicing of BCL2L1 by promoting splicing toward isoform Bcl-X(S), and of SMN1. Can regulate alternative splicing of NRXN1 and NRXN3 in the laminin G-like domain 6 containing the evolutionary conserved neurexin alternative spliced segment 4 (AS4) involved in neurexin selective targeting to postsynaptic partners. In a neuronal activity-dependent manner cooperates synergistically with KHDRBS2/SLIM-1 in regulation of NRXN1 exon skipping at AS4. The cooperation with KHDRBS2/SLIM-1 is antagonistic for regulation of NXRN3 alternative splicing at AS4. Its function is as follows. Isoform 3, which is expressed in growth-arrested cells only, inhibits S phase. This chain is KH domain-containing, RNA-binding, signal transduction-associated protein 1, found in Homo sapiens (Human).